The chain runs to 279 residues: 4-diphosphocytidyl-2-C-methyl-D-erythritol kinase (279 aa).

Residue lysine 11 is part of the active site. 95–105 (PVAAGLGGGSS) serves as a coordination point for ATP. Residue aspartate 137 is part of the active site.

The protein belongs to the GHMP kinase family. IspE subfamily.

The catalysed reaction is 4-CDP-2-C-methyl-D-erythritol + ATP = 4-CDP-2-C-methyl-D-erythritol 2-phosphate + ADP + H(+). Its pathway is isoprenoid biosynthesis; isopentenyl diphosphate biosynthesis via DXP pathway; isopentenyl diphosphate from 1-deoxy-D-xylulose 5-phosphate: step 3/6. In terms of biological role, catalyzes the phosphorylation of the position 2 hydroxy group of 4-diphosphocytidyl-2C-methyl-D-erythritol. The sequence is that of 4-diphosphocytidyl-2-C-methyl-D-erythritol kinase from Geotalea daltonii (strain DSM 22248 / JCM 15807 / FRC-32) (Geobacter daltonii).